A 299-amino-acid polypeptide reads, in one-letter code: Probable lipid kinase YegS (299 aa).

Residues 2-133 form the DAGKc domain; the sequence is ANFPASLLIL…IDMARVNDKT (132 aa). ATP-binding positions include Thr40, 66-72, and Thr95; that span reads GDGTINE. Positions 215, 218, and 220 each coordinate Mg(2+). The active-site Proton acceptor is Glu271.

It belongs to the diacylglycerol/lipid kinase family. YegS lipid kinase subfamily. Mg(2+) is required as a cofactor. The cofactor is Ca(2+).

It localises to the cytoplasm. Its function is as follows. Probably phosphorylates lipids; the in vivo substrate is unknown. This chain is Probable lipid kinase YegS, found in Salmonella paratyphi A (strain ATCC 9150 / SARB42).